The primary structure comprises 195 residues: NADH-quinone oxidoreductase subunit B (195 aa).

Positions 74, 75, 139, and 169 each coordinate [4Fe-4S] cluster.

It belongs to the complex I 20 kDa subunit family. NDH-1 is composed of 14 different subunits. Subunits NuoB, C, D, E, F, and G constitute the peripheral sector of the complex. Requires [4Fe-4S] cluster as cofactor.

The protein resides in the cell inner membrane. The enzyme catalyses a quinone + NADH + 5 H(+)(in) = a quinol + NAD(+) + 4 H(+)(out). NDH-1 shuttles electrons from NADH, via FMN and iron-sulfur (Fe-S) centers, to quinones in the respiratory chain. The immediate electron acceptor for the enzyme in this species is believed to be ubiquinone. Couples the redox reaction to proton translocation (for every two electrons transferred, four hydrogen ions are translocated across the cytoplasmic membrane), and thus conserves the redox energy in a proton gradient. The polypeptide is NADH-quinone oxidoreductase subunit B (Methylorubrum populi (strain ATCC BAA-705 / NCIMB 13946 / BJ001) (Methylobacterium populi)).